A 1444-amino-acid polypeptide reads, in one-letter code: DNA polymerase III PolC-type (1444 aa).

One can recognise an Exonuclease domain in the interval 428-584 (YCVFDVETTG…FDAEATAYLA (157 aa)).

The protein belongs to the DNA polymerase type-C family. PolC subfamily.

The protein resides in the cytoplasm. The catalysed reaction is DNA(n) + a 2'-deoxyribonucleoside 5'-triphosphate = DNA(n+1) + diphosphate. Functionally, required for replicative DNA synthesis. This DNA polymerase also exhibits 3' to 5' exonuclease activity. The chain is DNA polymerase III PolC-type from Listeria monocytogenes serovar 1/2a (strain ATCC BAA-679 / EGD-e).